A 64-amino-acid chain; its full sequence is Insect toxin OsI1 (64 aa).

One can recognise an LCN-type CS-alpha/beta domain in the interval 1 to 61; it reads DGYPKQKDGC…MWKYETNTCG (61 aa). Intrachain disulfides connect Cys10–Cys60, Cys14–Cys35, Cys21–Cys42, and Cys25–Cys44. Residue Gly61 is modified to Glycine amide.

It belongs to the long (4 C-C) scorpion toxin superfamily. Sodium channel inhibitor family. Beta subfamily. As to expression, expressed by the venom gland.

The protein localises to the secreted. In terms of biological role, depressant insect beta-toxins cause a transient contraction paralysis followed by a slow flaccid paralysis. They bind voltage-independently at site-4 of sodium channels (Nav) and shift the voltage of activation toward more negative potentials thereby affecting sodium channel activation and promoting spontaneous and repetitive firing. This toxin is active only on insects. The chain is Insect toxin OsI1 from Orthochirus scrobiculosus (Central Asian scorpion).